Reading from the N-terminus, the 173-residue chain is Cell division protein SepF (173 aa).

The tract at residues 31–82 (FEDFDEPLDERPSRNRSPRDDSRNNAVTDSSDHSPSRNERRSPAPAPATADL) is disordered. Basic and acidic residues-rich tracts occupy residues 39-53 (DERPSRNRSPRDDSR) and 60-72 (SSDHSPSRNERRS).

This sequence belongs to the SepF family. Homodimer. Interacts with FtsZ.

The protein resides in the cytoplasm. Functionally, cell division protein that is part of the divisome complex and is recruited early to the Z-ring. Probably stimulates Z-ring formation, perhaps through the cross-linking of FtsZ protofilaments. Its function overlaps with FtsA. The polypeptide is Cell division protein SepF (Thermobifida fusca (strain YX)).